Consider the following 242-residue polypeptide: Triosephosphate isomerase (242 aa).

8–10 (NWK) is a binding site for substrate. The active-site Electrophile is His-91. Residue Glu-155 is the Proton acceptor of the active site. Substrate-binding residues include Gly-161 and Ser-192.

This sequence belongs to the triosephosphate isomerase family. As to quaternary structure, homodimer.

It localises to the cytoplasm. It catalyses the reaction D-glyceraldehyde 3-phosphate = dihydroxyacetone phosphate. Its pathway is carbohydrate biosynthesis; gluconeogenesis. It participates in carbohydrate degradation; glycolysis; D-glyceraldehyde 3-phosphate from glycerone phosphate: step 1/1. Involved in the gluconeogenesis. Catalyzes stereospecifically the conversion of dihydroxyacetone phosphate (DHAP) to D-glyceraldehyde-3-phosphate (G3P). This is Triosephosphate isomerase from Wolbachia pipientis wMel.